A 145-amino-acid polypeptide reads, in one-letter code: Transmembrane protein 170A (145 aa).

The Lumenal segment spans residues Met1 to Gly50. Residues Asn31 and Asn37 are each glycosylated (N-linked (GlcNAc...) asparagine). A helical transmembrane segment spans residues Val51–Leu71. At Ala72–Arg81 the chain is on the cytoplasmic side. A helical transmembrane segment spans residues Phe82–Thr102. The Lumenal portion of the chain corresponds to Ser103–Met117. A helical transmembrane segment spans residues Phe118 to Phe138. Residues Leu139–Leu145 are Cytoplasmic-facing.

This sequence belongs to the TMEM170 family.

It localises to the endoplasmic reticulum membrane. It is found in the nucleus envelope. Functionally, may regulate membrane morphogenesis in the endoplasmic reticulum (ER) by promoting ER sheet formation at the expense of ER tubules. This Danio rerio (Zebrafish) protein is Transmembrane protein 170A (tmem170a).